Consider the following 308-residue polypeptide: ADP-L-glycero-D-manno-heptose-6-epimerase (308 aa).

Residues phenylalanine 10–isoleucine 11, aspartate 31–asparagine 32, lysine 38, lysine 53, glutamate 75–serine 79, and asparagine 92 contribute to the NADP(+) site. Tyrosine 139 (proton acceptor) is an active-site residue. Lysine 143 lines the NADP(+) pocket. Residue asparagine 168 participates in substrate binding. Valine 169 and lysine 177 together coordinate NADP(+). Lysine 177 serves as the catalytic Proton acceptor. Substrate is bound by residues serine 179, histidine 186, phenylalanine 200–serine 203, arginine 208, and tyrosine 271.

It belongs to the NAD(P)-dependent epimerase/dehydratase family. HldD subfamily. As to quaternary structure, homopentamer. Requires NADP(+) as cofactor.

It carries out the reaction ADP-D-glycero-beta-D-manno-heptose = ADP-L-glycero-beta-D-manno-heptose. The protein operates within nucleotide-sugar biosynthesis; ADP-L-glycero-beta-D-manno-heptose biosynthesis; ADP-L-glycero-beta-D-manno-heptose from D-glycero-beta-D-manno-heptose 7-phosphate: step 4/4. In terms of biological role, catalyzes the interconversion between ADP-D-glycero-beta-D-manno-heptose and ADP-L-glycero-beta-D-manno-heptose via an epimerization at carbon 6 of the heptose. The chain is ADP-L-glycero-D-manno-heptose-6-epimerase from Actinobacillus succinogenes (strain ATCC 55618 / DSM 22257 / CCUG 43843 / 130Z).